A 1257-amino-acid chain; its full sequence is Liprin-alpha-2 (1257 aa).

Disordered stretches follow at residues 1 to 29 (MMCE…DSDS), 231 to 265 (ASSE…DSTD), and 438 to 463 (EGQL…EHNK). Over residues 16–26 (SQRGSQSSGSD) the composition is skewed to low complexity. Coiled-coil stretches lie at residues 29-154 (SHFE…SLRM), 185-541 (KALD…SLIE), and 643-695 (HSDA…GLNL). The residue at position 236 (S236) is a Phosphoserine. T237 bears the Phosphothreonine mark. Residues 238–256 (ESEHLEGMEPGQKVHEKRL) show a composition bias toward basic and acidic residues. At S239 the chain carries Phosphoserine. Phosphoserine is present on residues S687 and S689. Composition is skewed to low complexity over residues 709-725 (TASS…HSTP) and 798-813 (SSLS…GLGS). 2 disordered regions span residues 709 to 738 (TASS…EMDR) and 790 to 834 (SSYH…KSSI). Phosphoserine is present on residues S817 and S820. 3 consecutive SAM domains span residues 898-964 (WDGP…MVSL), 1020-1084 (NHEW…LKRL), and 1108-1177 (WSND…LLAL). The stretch at 1081-1107 (LKRLNYDRKELERRREASQHEIKDVLV) forms a coiled coil.

The protein belongs to the liprin family. Liprin-alpha subfamily. As to quaternary structure, forms homodimers and heterodimers with liprins-alpha and liprins-beta. Interacts with the second PTPase domain of PTPRD, PTPRF and PTPRS. Interacts with KIF1A; the interaction decreases in presence of calcium. In terms of tissue distribution, expressed only in brain.

It is found in the cytoplasm. Its subcellular location is the cell surface. It localises to the cell projection. The protein localises to the dendritic spine. Functionally, alters PTPRF cellular localization and induces PTPRF clustering. May regulate the disassembly of focal adhesions. May localize receptor-like tyrosine phosphatases type 2A at specific sites on the plasma membrane, possibly regulating their interaction with the extracellular environment and their association with substrates. In neuronal cells, is a scaffolding protein in the dendritic spines which acts as immobile postsynaptic post able to recruit KIF1A-driven dense core vesicles to dendritic spines. This is Liprin-alpha-2 (PPFIA2) from Homo sapiens (Human).